A 426-amino-acid polypeptide reads, in one-letter code: Putative phosphate permease CPn_0680/CP_0067/CPj0680/CpB0707 (426 aa).

Helical transmembrane passes span 1–21 (MLPL…NIGA), 42–62 (AVVI…DRVA), 87–107 (TAAL…GWPV), 112–132 (SIVG…IIYW), 137–157 (IILI…YLIF), 180–200 (FLAA…GVIL), 207–227 (WAVS…FYYV), 260–280 (LVVE…MAFA), 313–333 (LMAF…WRVI), 364–384 (ILGL…GIGL), and 399–419 (IVLS…LFFF).

It belongs to the inorganic phosphate transporter (PiT) (TC 2.A.20) family.

Its subcellular location is the cell membrane. Its function is as follows. Potential transporter for phosphate. This is Putative phosphate permease CPn_0680/CP_0067/CPj0680/CpB0707 from Chlamydia pneumoniae (Chlamydophila pneumoniae).